Reading from the N-terminus, the 427-residue chain is Trigger factor (427 aa).

Positions Gly163–Pro248 constitute a PPIase FKBP-type domain.

Belongs to the FKBP-type PPIase family. Tig subfamily.

It localises to the cytoplasm. The catalysed reaction is [protein]-peptidylproline (omega=180) = [protein]-peptidylproline (omega=0). Functionally, involved in protein export. Acts as a chaperone by maintaining the newly synthesized protein in an open conformation. Functions as a peptidyl-prolyl cis-trans isomerase. This is Trigger factor from Streptococcus gordonii (strain Challis / ATCC 35105 / BCRC 15272 / CH1 / DL1 / V288).